Consider the following 262-residue polypeptide: Putative carbamate hydrolase RutD (262 aa).

Belongs to the AB hydrolase superfamily. Hydrolase RutD family.

It carries out the reaction carbamate + 2 H(+) = NH4(+) + CO2. In terms of biological role, involved in pyrimidine catabolism. May facilitate the hydrolysis of carbamate, a reaction that can also occur spontaneously. In Rhizobium rhizogenes (strain K84 / ATCC BAA-868) (Agrobacterium radiobacter), this protein is Putative carbamate hydrolase RutD.